Consider the following 142-residue polypeptide: 3-hydroxyacyl-[acyl-carrier-protein] dehydratase FabZ (142 aa).

His41 is a catalytic residue.

It belongs to the thioester dehydratase family. FabZ subfamily.

It is found in the cytoplasm. It catalyses the reaction a (3R)-hydroxyacyl-[ACP] = a (2E)-enoyl-[ACP] + H2O. Involved in unsaturated fatty acids biosynthesis. Catalyzes the dehydration of short chain beta-hydroxyacyl-ACPs and long chain saturated and unsaturated beta-hydroxyacyl-ACPs. This Symbiobacterium thermophilum (strain DSM 24528 / JCM 14929 / IAM 14863 / T) protein is 3-hydroxyacyl-[acyl-carrier-protein] dehydratase FabZ.